Consider the following 664-residue polypeptide: DNA mismatch repair protein MutL (664 aa).

Belongs to the DNA mismatch repair MutL/HexB family.

This protein is involved in the repair of mismatches in DNA. It is required for dam-dependent methyl-directed DNA mismatch repair. May act as a 'molecular matchmaker', a protein that promotes the formation of a stable complex between two or more DNA-binding proteins in an ATP-dependent manner without itself being part of a final effector complex. This is DNA mismatch repair protein MutL from Clostridium beijerinckii (strain ATCC 51743 / NCIMB 8052) (Clostridium acetobutylicum).